A 281-amino-acid polypeptide reads, in one-letter code: Bifunctional protein FolD (281 aa).

Residues 161-163, serine 186, and isoleucine 227 contribute to the NADP(+) site; that span reads GRS.

The protein belongs to the tetrahydrofolate dehydrogenase/cyclohydrolase family. As to quaternary structure, homodimer.

It catalyses the reaction (6R)-5,10-methylene-5,6,7,8-tetrahydrofolate + NADP(+) = (6R)-5,10-methenyltetrahydrofolate + NADPH. The catalysed reaction is (6R)-5,10-methenyltetrahydrofolate + H2O = (6R)-10-formyltetrahydrofolate + H(+). It functions in the pathway one-carbon metabolism; tetrahydrofolate interconversion. Its function is as follows. Catalyzes the oxidation of 5,10-methylenetetrahydrofolate to 5,10-methenyltetrahydrofolate and then the hydrolysis of 5,10-methenyltetrahydrofolate to 10-formyltetrahydrofolate. This chain is Bifunctional protein FolD, found in Brachyspira hyodysenteriae (strain ATCC 49526 / WA1).